The following is a 199-amino-acid chain: Riboflavin synthase (199 aa).

2 Lumazine-binding repeats span residues 1 to 95 and 96 to 188; these read MFSG…IGGH and FVSG…VDTI. 2,4-dihydroxypteridine is bound by residues 4-6, 46-48, 60-65, 99-101, K130, 139-141, and 153-158; these read GII, CLT, DVTEET, GHV, SLT, and SLIPET.

As to quaternary structure, homotrimer.

The enzyme catalyses 2 6,7-dimethyl-8-(1-D-ribityl)lumazine + H(+) = 5-amino-6-(D-ribitylamino)uracil + riboflavin. It functions in the pathway cofactor biosynthesis; riboflavin biosynthesis; riboflavin from 2-hydroxy-3-oxobutyl phosphate and 5-amino-6-(D-ribitylamino)uracil: step 2/2. Catalyzes the dismutation of two molecules of 6,7-dimethyl-8-ribityllumazine, resulting in the formation of riboflavin and 5-amino-6-(D-ribitylamino)uracil. This Chlamydia trachomatis serovar D (strain ATCC VR-885 / DSM 19411 / UW-3/Cx) protein is Riboflavin synthase (ribE).